Reading from the N-terminus, the 220-residue chain is Ribose-5-phosphate isomerase A (220 aa).

Residues 25 to 28 (TGST), 80 to 83 (DGAD), and 93 to 96 (KGGG) each bind substrate. Glu-102 serves as the catalytic Proton acceptor. Lys-120 serves as a coordination point for substrate.

This sequence belongs to the ribose 5-phosphate isomerase family. Homodimer.

The catalysed reaction is aldehydo-D-ribose 5-phosphate = D-ribulose 5-phosphate. It functions in the pathway carbohydrate degradation; pentose phosphate pathway; D-ribose 5-phosphate from D-ribulose 5-phosphate (non-oxidative stage): step 1/1. Catalyzes the reversible conversion of ribose-5-phosphate to ribulose 5-phosphate. This Bacillus cereus (strain ATCC 14579 / DSM 31 / CCUG 7414 / JCM 2152 / NBRC 15305 / NCIMB 9373 / NCTC 2599 / NRRL B-3711) protein is Ribose-5-phosphate isomerase A.